The chain runs to 385 residues: cAMP-dependent protein kinase regulatory subunit (385 aa).

Positions 1 to 22 (MSSTGFTSPFGNANPFGSSGRS) are enriched in polar residues. Disordered stretches follow at residues 1–51 (MSST…GVKN) and 77–111 (DFPA…PVHP). The segment at 1–128 (MSSTGFTSPF…RLKKAISGNF (128 aa)) is dimerization and phosphorylation. Serine 89 is modified (phosphoserine). Residues 129–260 (LFNH…EEVP), glutamate 207, arginine 216, 261–378 (ILKT…EAEE), glutamate 328, and arginine 337 contribute to the 3',5'-cyclic AMP site.

It belongs to the cAMP-dependent kinase regulatory chain family. Tetramer, composed of 2 regulatory (R) and 2 catalytic (C) subunits. In the presence of cAMP it dissociates into 2 active monomeric C subunits and an R dimer.

The polypeptide is cAMP-dependent protein kinase regulatory subunit (mcb) (Neurospora crassa (strain ATCC 24698 / 74-OR23-1A / CBS 708.71 / DSM 1257 / FGSC 987)).